A 405-amino-acid polypeptide reads, in one-letter code: uncharacterized protein (405 aa).

12 consecutive transmembrane segments (helical) span residues 3 to 23, 42 to 62, 73 to 93, 95 to 115, 135 to 155, 162 to 182, 209 to 229, 248 to 268, 280 to 300, 309 to 329, 346 to 366, and 377 to 397; these read IIAKIPAWMLLCLFILSPTTE, GITQTTSTLYFLGFALGILTL, PIALLGLFIYVISSIISIFAV, IEMLMIARFVQAFGVSVGSVI, SLSPWLLFIPSLGSSIGGYII, YVFVFFSLTGTILLALYYKVL, ILWLYAFIIGAFNGIYYGFFI, KLAFLLSFAAIFGGFLGGYLI, GLGFIFSLCGCILFAVNAFIL, LAIAMIFVPMMIHMVGHNLLI, TAGSIFGAIYYVVIAAVTYLV, and FALLCFVLSISSAISFYCIWV.

The protein belongs to the major facilitator superfamily. Bcr/CmlA family.

It is found in the cell inner membrane. This is an uncharacterized protein from Rickettsia felis (strain ATCC VR-1525 / URRWXCal2) (Rickettsia azadi).